A 196-amino-acid chain; its full sequence is Secreted effector protein SseB (196 aa).

It belongs to the EspA/SseB family. As to quaternary structure, may form a complex with SseC and SseD. Binds to the chaperone SseA.

The protein resides in the secreted. The protein localises to the cell surface. In terms of biological role, effector proteins function to alter host cell physiology and promote bacterial survival in host tissues. May act as a translocator that mediates translocation of SPI-2 T3SS effector proteins from intraphagosomal bacterial cells into the host cells. SseB is required for correct localization of SseC and SseD on the bacterial cell surface. In Salmonella typhimurium (strain LT2 / SGSC1412 / ATCC 700720), this protein is Secreted effector protein SseB (sseB).